A 100-amino-acid chain; its full sequence is Aspartyl/glutamyl-tRNA(Asn/Gln) amidotransferase subunit C (100 aa).

It belongs to the GatC family. In terms of assembly, heterotrimer of A, B and C subunits.

It catalyses the reaction L-glutamyl-tRNA(Gln) + L-glutamine + ATP + H2O = L-glutaminyl-tRNA(Gln) + L-glutamate + ADP + phosphate + H(+). It carries out the reaction L-aspartyl-tRNA(Asn) + L-glutamine + ATP + H2O = L-asparaginyl-tRNA(Asn) + L-glutamate + ADP + phosphate + 2 H(+). Functionally, allows the formation of correctly charged Asn-tRNA(Asn) or Gln-tRNA(Gln) through the transamidation of misacylated Asp-tRNA(Asn) or Glu-tRNA(Gln) in organisms which lack either or both of asparaginyl-tRNA or glutaminyl-tRNA synthetases. The reaction takes place in the presence of glutamine and ATP through an activated phospho-Asp-tRNA(Asn) or phospho-Glu-tRNA(Gln). This Rickettsia bellii (strain OSU 85-389) protein is Aspartyl/glutamyl-tRNA(Asn/Gln) amidotransferase subunit C.